We begin with the raw amino-acid sequence, 276 residues long: MRLYRDRAVVLRQHKLGEADRIVTLLTRDHGLVRAVAKGVRRTRSKFGARLEPFAHIDVQLHPGRNLDIVTQVQAIDAFASDIVSDYGRYTSACAVLETAERLAGEERAPMPALHRLTVGALRAVADGSRPRELVLDAYLLRAMGIAGWAPALTECARCATPGPHRAFHVAAGGSVCVHCRPSGSVTPPQAVLDLMSALHDGDWPAAEASTPSHRSQASGLVAAHLQWHLERQLRTLPLVERVYRVDHAVADHRISLLRQDVHRGDEPGDQLAAGS.

Belongs to the RecO family.

Functionally, involved in DNA repair and RecF pathway recombination. This Mycobacterium sp. (strain JLS) protein is DNA repair protein RecO.